Reading from the N-terminus, the 228-residue chain is Aquaporin Z 1 (228 aa).

A run of 2 helical transmembrane segments spans residues 9-29 (FLGT…AAAF) and 34-54 (IGLL…AYAV). An NPA 1 motif is present at residues 63–65 (NPA). The next 3 membrane-spanning stretches (helical) occupy residues 82–102 (VGYI…LYVI), 129–149 (LTAA…IILG), and 156–176 (PVGF…LVSI). Residues 184–186 (NPA) carry the NPA 2 motif. Residues 204–224 (WLFWVAPLIGAVIAGIVWKIV) form a helical membrane-spanning segment.

It belongs to the MIP/aquaporin (TC 1.A.8) family. As to quaternary structure, homotetramer.

It localises to the cell inner membrane. The enzyme catalyses H2O(in) = H2O(out). Functionally, channel that permits osmotically driven movement of water in both directions. It is involved in the osmoregulation and in the maintenance of cell turgor during volume expansion in rapidly growing cells. It mediates rapid entry or exit of water in response to abrupt changes in osmolarity. The chain is Aquaporin Z 1 from Rhizobium meliloti (strain 1021) (Ensifer meliloti).